Reading from the N-terminus, the 852-residue chain is DNA polymerase kappa (852 aa).

A UmuC domain is found at 102–357 (IVHVDMDAFY…LPIRKVSGIG (256 aa)). Mg(2+) contacts are provided by D106 and D197. The interval 252–273 (FEDSPPDLQPQGSPFQLNSEEQ) is disordered. Residues 261 to 273 (PQGSPFQLNSEEQ) are compositionally biased toward polar residues. UBZ4-type zinc fingers lie at residues 619–649 (TFIC…DGPS) and 761–791 (ALVC…NKGI). Residues C622, C625, H640, C644, C764, C767, H782, and C786 each coordinate Zn(2+). The disordered stretch occupies residues 798-852 (SEGNSVKQPKESSRSTDRLQKASGRTKRPGTKTKSSTLKKTKPRDPRHTLDGFFK). Basic and acidic residues predominate over residues 805–817 (QPKESSRSTDRLQ). Residues 821 to 839 (GRTKRPGTKTKSSTLKKTK) show a composition bias toward basic residues. Positions 840-852 (PRDPRHTLDGFFK) are enriched in basic and acidic residues.

The protein belongs to the DNA polymerase type-Y family. Interacts with PCNA. Interacts with REV1. Mg(2+) serves as cofactor. The cofactor is Mn(2+). In terms of tissue distribution, detected at low levels in heart, brain, lung, liver, kidney and testis.

The protein resides in the nucleus. It carries out the reaction DNA(n) + a 2'-deoxyribonucleoside 5'-triphosphate = DNA(n+1) + diphosphate. DNA polymerase specifically involved in DNA repair. Plays an important role in translesion synthesis, where the normal high-fidelity DNA polymerases cannot proceed and DNA synthesis stalls. Depending on the context, it inserts the correct base, but causes frequent base transitions, transversions and frameshifts. Lacks 3'-5' proofreading exonuclease activity. Forms a Schiff base with 5'-deoxyribose phosphate at abasic sites, but does not have lyase activity. This chain is DNA polymerase kappa (Polk), found in Mus musculus (Mouse).